The chain runs to 388 residues: Probable peptidoglycan glycosyltransferase FtsW (388 aa).

Residues 1 to 19 (MMSPSTSAPHNQPIQPELD) are Cytoplasmic-facing. The chain crosses the membrane as a helical span at residues 20–40 (VLLVSTVLLLLGLGLVMVYSA). Residues 41-55 (SIAIAEAKFGEGSSY) lie on the Periplasmic side of the membrane. The chain crosses the membrane as a helical span at residues 56 to 76 (YFLARQASYILAGIAVGIGCF). At 77–89 (RIPLRWWQAYSHY) the chain is on the cytoplasmic side. A helical membrane pass occupies residues 90 to 110 (LLGLGILLLLVVLIPGISHEI). Residues 111–116 (NGSRRW) are Periplasmic-facing. Residues 117 to 137 (IPLGITSFQPSELMKLIILIF) form a helical membrane-spanning segment. Topologically, residues 138–151 (TADYVVRKAAFKDH) are cytoplasmic. The helical transmembrane segment at 152-172 (FFKGFLPILALLTIVSLLLLM) threads the bilayer. The Periplasmic segment spans residues 173 to 175 (EPD). Helical transmembrane passes span 176–196 (LGAT…NGMS) and 197–217 (LKMF…LIII). At 218-284 (EPYRMDRINA…DFMFAVLAEE (67 aa)) the chain is on the periplasmic side. The helical transmembrane segment at 285–305 (LGFAGVVTVISLFFFLLVRIF) threads the bilayer. Residues 306–324 (KVGRTAARLGDQFGSLVAQ) are Cytoplasmic-facing. The chain crosses the membrane as a helical span at residues 325–345 (GIGVWLGLQAFINMGVNMGLL). Residues 346 to 351 (PTKGLT) lie on the Periplasmic side of the membrane. Residues 352-372 (LPFMSYGGSSIVINSIAIAIL) traverse the membrane as a helical segment. Topologically, residues 373–388 (LRIDWENRLKRRGLNA) are cytoplasmic.

The protein belongs to the SEDS family. FtsW subfamily.

It localises to the cell inner membrane. It carries out the reaction [GlcNAc-(1-&gt;4)-Mur2Ac(oyl-L-Ala-gamma-D-Glu-L-Lys-D-Ala-D-Ala)](n)-di-trans,octa-cis-undecaprenyl diphosphate + beta-D-GlcNAc-(1-&gt;4)-Mur2Ac(oyl-L-Ala-gamma-D-Glu-L-Lys-D-Ala-D-Ala)-di-trans,octa-cis-undecaprenyl diphosphate = [GlcNAc-(1-&gt;4)-Mur2Ac(oyl-L-Ala-gamma-D-Glu-L-Lys-D-Ala-D-Ala)](n+1)-di-trans,octa-cis-undecaprenyl diphosphate + di-trans,octa-cis-undecaprenyl diphosphate + H(+). The protein operates within cell wall biogenesis; peptidoglycan biosynthesis. Functionally, peptidoglycan polymerase that is essential for cell division. The protein is Probable peptidoglycan glycosyltransferase FtsW of Nitrosomonas europaea (strain ATCC 19718 / CIP 103999 / KCTC 2705 / NBRC 14298).